The primary structure comprises 620 residues: Schwann cell myelin protein (620 aa).

An N-terminal signal peptide occupies residues 1–17 (MELLVLTVLLMGTGCIS). The Extracellular portion of the chain corresponds to 18 to 516 (APWAAWMPPK…GGLVWAKVGP (499 aa)). The 79-residue stretch at 28-106 (MAALSGTCVQ…RDCTLNIARL (79 aa)) folds into the Ig-like V-type domain. 3 disulfides stabilise this stretch: Cys35/Cys164, Cys40/Cys99, and Cys158/Cys216. Arg117 serves as a coordination point for N-acetylneuraminate. Ig-like C2-type domains lie at 151–233 (GSEA…DVGL), 239–322 (PQVV…LRVA), 325–407 (PRAP…FNIS), and 414–495 (VLPA…NRHG). N-linked (GlcNAc...) asparagine glycosylation occurs at Asn222. Cysteines 260 and 304 form a disulfide. Residues Asn314 and Asn331 are each glycosylated (N-linked (GlcNAc...) asparagine). Cys346 and Cys391 form a disulfide bridge. Asn405 carries N-linked (GlcNAc...) asparagine glycosylation. 2 disulfides stabilise this stretch: Cys420–Cys429 and Cys431–Cys488. Asn449 carries an N-linked (GlcNAc...) asparagine glycan. A helical membrane pass occupies residues 517-536 (VGAVVAFAIVIAVVCYLSQS). Residues 537 to 620 (RRKKGAGSPE…PPEYAEIRVK (84 aa)) lie on the Cytoplasmic side of the membrane. Disordered stretches follow at residues 539 to 562 (KKGA…DPDL) and 583 to 620 (VKEG…IRVK).

It belongs to the immunoglobulin superfamily. SIGLEC (sialic acid binding Ig-like lectin) family. In terms of tissue distribution, exclusively expressed by myelinating and nonmyelinating Schwann cells and oligodendrocytes.

The protein resides in the membrane. In Coturnix japonica (Japanese quail), this protein is Schwann cell myelin protein (SMP).